The chain runs to 1139 residues: Phospholipid-transporting ATPase tat-1 (1139 aa).

A run of 3 helical transmembrane segments spans residues 78–98 (YTTAVPFLIILSVSALKEIFE), 276–296 (IIFLFFVLVALALISATGSEI), and 318–338 (SFLWGVLTFFILYNNLIPISL). Aspartate 388 serves as the catalytic 4-aspartylphosphate intermediate. 6 helical membrane passes run 831 to 851 (ICLYIIELWFAMFSAWSGQTI), 855 to 875 (WTIGMFNVIFTAWPPVVLGLF), 901 to 921 (IGNFSLWIGLAIVHSLSLFFL), 935 to 955 (GLTGGWLMLGNCAYTFVVATV), 972 to 992 (VACIGSIGLWIVFVIVYSLVF), and 1013 to 1033 (YTFWLALLFIPLATLLWDLVI).

Belongs to the cation transport ATPase (P-type) (TC 3.A.3) family. Type IV subfamily.

The protein resides in the cell membrane. It is found in the early endosome membrane. It localises to the recycling endosome membrane. The catalysed reaction is ATP + H2O + phospholipidSide 1 = ADP + phosphate + phospholipidSide 2.. It catalyses the reaction a 1,2-diacyl-sn-glycero-3-phospho-L-serine(out) + ATP + H2O = a 1,2-diacyl-sn-glycero-3-phospho-L-serine(in) + ADP + phosphate + H(+). Its function is as follows. Transports phosphatidylserine from the outer to the inner leaflet of the plasma membrane, thereby maintaining the enrichment of this phospholipid in the inner leaflet. Ectopic exposure of phosphatidylserine on the cell surface may result in removal of living cells by neighboring phagocytes. Regulation of the phosphatidylserine distribution in plasma membranes is likely to help in the maintenance and control of the membrane surface charge. Plays a role in the formation of the tubular membrane structure and in membrane trafficking and is specifically involved in the recycling and degradation of endocytic cargo, likely with its chaperone protein chat-1. In Caenorhabditis elegans, this protein is Phospholipid-transporting ATPase tat-1 (tat-1).